Reading from the N-terminus, the 562-residue chain is Thermosome subunit alpha (562 aa).

2 disordered regions span residues 1 to 23 (MAQQMGNQPLIVLSEDSQRTSGE) and 526 to 551 (GGQVGDDDGDDGPAGGPGGMGGGMGG). The segment covering 537 to 551 (GPAGGPGGMGGGMGG) has biased composition (gly residues).

The protein belongs to the TCP-1 chaperonin family. In terms of assembly, forms an oligomeric complex of eight-membered rings.

In terms of biological role, molecular chaperone; binds unfolded polypeptides in vitro, and has a weak ATPase activity. In Halobacterium salinarum (strain ATCC 700922 / JCM 11081 / NRC-1) (Halobacterium halobium), this protein is Thermosome subunit alpha (thsA).